The sequence spans 449 residues: Heterogeneous nuclear ribonucleoprotein H (449 aa).

The residue at position 1 (M1) is an N-acetylmethionine. M2 is subject to N-acetylmethionine; in Heterogeneous nuclear ribonucleoprotein H, N-terminally processed. The RRM 1 domain occupies F11–N90. At S23 the chain carries Phosphoserine. K35 participates in a covalent cross-link: Glycyl lysine isopeptide (Lys-Gly) (interchain with G-Cter in SUMO2). S54 and S63 each carry phosphoserine. Residues K87 and K98 each participate in a glycyl lysine isopeptide (Lys-Gly) (interchain with G-Cter in SUMO2) cross-link. The 78-residue stretch at G111–R188 folds into the RRM 2 domain. R233 carries the dimethylated arginine; alternate modification. Residue R233 is modified to Omega-N-methylarginine; alternate. The 1-1 repeat unit spans residues G234–Y249. Residues G234–Y433 form a 2 X 16 AA Gly-rich approximate repeats region. Position 246 is a phosphotyrosine (Y246). The RRM 3 domain occupies H289 to T364. A Phosphoserine modification is found at S310. Tandem repeats lie at residues H354 to Y372, H374 to Y392, and G418 to Y433. The segment at H354–Y392 is 2 X 19 AA perfect repeats.

Part of a ternary complex containing FUBP2, PTBP1, PTBP2 and HNRNPH1. Identified in the spliceosome C complex. Interacts with IGF2BP1. Interacts with CUGBP1; the interaction is RNA-dependent. Interacts with MBNL1; the interaction in RNA-independent.

It localises to the nucleus. It is found in the nucleoplasm. In terms of biological role, this protein is a component of the heterogeneous nuclear ribonucleoprotein (hnRNP) complexes which provide the substrate for the processing events that pre-mRNAs undergo before becoming functional, translatable mRNAs in the cytoplasm. Mediates pre-mRNA alternative splicing regulation. Inhibits, together with CUGBP1, insulin receptor (IR) pre-mRNA exon 11 inclusion in myoblast. Binds to the IR RNA. Binds poly(RG). This is Heterogeneous nuclear ribonucleoprotein H (Hnrnph1) from Rattus norvegicus (Rat).